Here is a 98-residue protein sequence, read N- to C-terminus: DNA-binding protein Fis (98 aa).

The H-T-H motif DNA-binding region spans 74–93 (QTRAAQMMGINRGTLRKKLK).

It belongs to the transcriptional regulatory Fis family. In terms of assembly, homodimer.

Functionally, activates ribosomal RNA transcription. Plays a direct role in upstream activation of rRNA promoters. This chain is DNA-binding protein Fis, found in Proteus hauseri.